A 185-amino-acid chain; its full sequence is Large ribosomal subunit protein bL12c (185 aa).

The N-terminal 47 residues, 1–47 (MASTALSSAFSLLSLPSSSSPAAAAAAAPRSFAVPSRARPRRAVAVV), are a transit peptide targeting the chloroplast.

This sequence belongs to the bacterial ribosomal protein bL12 family.

The protein resides in the plastid. It is found in the chloroplast. The chain is Large ribosomal subunit protein bL12c (RPL12-2) from Oryza sativa subsp. japonica (Rice).